The following is a 227-amino-acid chain: Ribonuclease 3 (227 aa).

Positions 7-132 constitute an RNase III domain; it reads LTAFMDRLGY…VIAAVYLDGG (126 aa). Glu-45 contacts Mg(2+). Asp-49 is a catalytic residue. Mg(2+)-binding residues include Asp-118 and Glu-121. Residue Glu-121 is part of the active site. Residues 157-226 form the DRBM domain; that stretch reads DAKTALQEWA…AKDLLAQLAG (70 aa).

The protein belongs to the ribonuclease III family. In terms of assembly, homodimer. It depends on Mg(2+) as a cofactor.

The protein localises to the cytoplasm. The catalysed reaction is Endonucleolytic cleavage to 5'-phosphomonoester.. In terms of biological role, digests double-stranded RNA. Involved in the processing of primary rRNA transcript to yield the immediate precursors to the large and small rRNAs (23S and 16S). Processes some mRNAs, and tRNAs when they are encoded in the rRNA operon. Processes pre-crRNA and tracrRNA of type II CRISPR loci if present in the organism. This Jannaschia sp. (strain CCS1) protein is Ribonuclease 3.